Consider the following 371-residue polypeptide: Queuine tRNA-ribosyltransferase (371 aa).

The Proton acceptor role is filled by Asp-93. Residues 93-97 (DSGGF), Asp-147, Gln-191, and Gly-218 each bind substrate. Residues 249-255 (GVGTVVD) form an RNA binding region. Asp-268 (nucleophile) is an active-site residue. The tract at residues 273-277 (TRNAR) is RNA binding; important for wobble base 34 recognition. Residues Cys-306, Cys-308, Cys-311, and His-337 each coordinate Zn(2+).

The protein belongs to the queuine tRNA-ribosyltransferase family. Homodimer. Within each dimer, one monomer is responsible for RNA recognition and catalysis, while the other monomer binds to the replacement base PreQ1. The cofactor is Zn(2+).

The enzyme catalyses 7-aminomethyl-7-carbaguanine + guanosine(34) in tRNA = 7-aminomethyl-7-carbaguanosine(34) in tRNA + guanine. Its pathway is tRNA modification; tRNA-queuosine biosynthesis. Its function is as follows. Catalyzes the base-exchange of a guanine (G) residue with the queuine precursor 7-aminomethyl-7-deazaguanine (PreQ1) at position 34 (anticodon wobble position) in tRNAs with GU(N) anticodons (tRNA-Asp, -Asn, -His and -Tyr). Catalysis occurs through a double-displacement mechanism. The nucleophile active site attacks the C1' of nucleotide 34 to detach the guanine base from the RNA, forming a covalent enzyme-RNA intermediate. The proton acceptor active site deprotonates the incoming PreQ1, allowing a nucleophilic attack on the C1' of the ribose to form the product. After dissociation, two additional enzymatic reactions on the tRNA convert PreQ1 to queuine (Q), resulting in the hypermodified nucleoside queuosine (7-(((4,5-cis-dihydroxy-2-cyclopenten-1-yl)amino)methyl)-7-deazaguanosine). The polypeptide is Queuine tRNA-ribosyltransferase (Leptospira biflexa serovar Patoc (strain Patoc 1 / Ames)).